We begin with the raw amino-acid sequence, 1621 residues long: Cilia- and flagella-associated protein 43 (1621 aa).

WD repeat units lie at residues 97-138, 141-180, 293-330, 334-373, 377-417, 464-503, 634-673, and 679-721; these read GAQL…PLCS, DSQT…NQYQ, LLEG…VKLE, NAQE…ETYK, VYSR…SVSS, LYCV…SFQV, GSQL…TMAQ, and YHNG…SSRL. Coiled coils occupy residues 792 to 812, 850 to 870, 1026 to 1046, 1098 to 1118, 1150 to 1177, 1362 to 1389, 1451 to 1514, and 1591 to 1611; these read IKRK…AEKE, TEEQ…VRQE, CRQK…IQEI, VEEA…ALDD, TEEE…YSKE, DEKM…FQLD, IFQL…QEKQ, and AKIQ…LRMK.

The protein belongs to the CFAP43 family.

Its subcellular location is the cytoplasm. It localises to the cytoskeleton. It is found in the cilium axoneme. Functionally, involved in the regulation of the beating frequency of motile cilia in multiciliated cells of the larval epidermis. In Xenopus laevis (African clawed frog), this protein is Cilia- and flagella-associated protein 43 (cfap43).